A 565-amino-acid polypeptide reads, in one-letter code: MSEQKLALNEYLKTDSDYLRGTIKEGLDSAVTGSFSDGDQQLIKFHGFYQQDDRDLRNERKEQKLEPLYSFMLRARVPGGICSPQQWLGVDKIASTLTSSNSIRLTTRQTFQYHGIPKRNLKTIIQDLDREALDSIAACGDVNRNVMCNPNPVESKLHEQAYAVAKQLSDHLLPHTRAYAEIWLDEEKLLSTEDETVEPVYGKTYLPRKFKMAVAVPPDNDVDVYTNDLGFIAVAENGELVGFNLTAGGGMGSTHGEVETFPRLADDFGFIKTEDVMKFAEAVMTVQRDWGNRVNRKRSRLKYTIVDHGYEKFKAEVELRAGVKFEPKRDVVIGDRGDRYGWVEGVDGKWHLTLFIESGRIKDLPGQTLQTGLREIAKIHKGDFRMTSNQNMIIAGVAAEDKATIEGLARKHGLLGQVLTQTRGHSIACVALPTCPLAMAEAERYFPEFIDHIDALQAKHGISEQAIVVRMTGCPNGCARPFAAEIGLVGKAPGRYNLYLGASFEGTRLNKMHRENIQEAEILAELDTLFGRYAVERDAGETFGNFTVRVGVVKAVIDAAKDFHG.

Positions 429, 435, 474, and 478 each coordinate [4Fe-4S] cluster. Cysteine 478 lines the siroheme pocket.

It belongs to the nitrite and sulfite reductase 4Fe-4S domain family. As to quaternary structure, alpha(8)-beta(8). The alpha component is a flavoprotein, the beta component is a hemoprotein. It depends on siroheme as a cofactor. Requires [4Fe-4S] cluster as cofactor.

The enzyme catalyses hydrogen sulfide + 3 NADP(+) + 3 H2O = sulfite + 3 NADPH + 4 H(+). It functions in the pathway sulfur metabolism; hydrogen sulfide biosynthesis; hydrogen sulfide from sulfite (NADPH route): step 1/1. In terms of biological role, component of the sulfite reductase complex that catalyzes the 6-electron reduction of sulfite to sulfide. This is one of several activities required for the biosynthesis of L-cysteine from sulfate. The protein is Sulfite reductase [NADPH] hemoprotein beta-component of Shewanella baltica (strain OS155 / ATCC BAA-1091).